The following is a 291-amino-acid chain: MACLSPSQLQKFQQDGFLVLEGFLSAEECVAMQQRIGEIVAEMDVPLHCRTEFSTQEEEQLRAQGSTDYFLSSGDKIRFFFEKGVFDEKGNFLVPPEKSINKIGHALHAHDPVFKSITHSFKVQTLARSLGLQMPVVVQSMYIFKQPHFGGEVSPHQDASFLYTEPLGRVLGVWIAVEDATLENGCLWFIPGSHTSGVSRRMVRAPVGSAPGTSFLGSEPARDNSLFVPTPVQRGALVLIHGEVVHKSKQNLSDRSRQAYTFHLMEASGTTWSPENWLQPTAELPFPQLYT.

Threonine 55 carries the phosphothreonine modification. 2-oxoglutarate-binding positions include lysine 102, methionine 141, 156–158, and tryptophan 174; that span reads HQD. Residues histidine 156 and aspartate 158 each contribute to the Fe cation site. Histidine 246 serves as a coordination point for Fe cation. Residues serine 248 and arginine 257 each coordinate 2-oxoglutarate.

This sequence belongs to the PhyH family. PHYHD1 subfamily. The cofactor is Fe cation.

Its activity is regulated as follows. Activity is increased by ascorbate. Inhibited by myristoyl-CoA. In terms of biological role, 2-oxoglutarate(2OG)-dependent dioxygenase that catalyzes the conversion of 2-oxoglutarate to succinate and CO(2) in an iron-dependent manner. However, does not couple 2OG turnover to the hydroxylation of acyl-coenzyme A derivatives, implying that it is not directly involved in phytanoyl coenzyme-A metabolism. Does not show detectable activity towards fatty acid CoA thioesters. Functionally, isoform 2 probably lacks enzyme activity. Its function is as follows. Isoform 3 probably lacks enzyme activity. This Homo sapiens (Human) protein is Phytanoyl-CoA dioxygenase domain-containing protein 1.